Reading from the N-terminus, the 111-residue chain is Putative carnobacteriocin-B2 immunity protein (111 aa).

Could impart immunity to carnobacteriocin-B2 to naturally sensitive host strains. This is Putative carnobacteriocin-B2 immunity protein from Carnobacterium maltaromaticum (Carnobacterium piscicola).